A 338-amino-acid polypeptide reads, in one-letter code: Nicotinate-nucleotide--dimethylbenzimidazole phosphoribosyltransferase (338 aa).

The active-site Proton acceptor is the Glu-305.

This sequence belongs to the CobT family.

It carries out the reaction 5,6-dimethylbenzimidazole + nicotinate beta-D-ribonucleotide = alpha-ribazole 5'-phosphate + nicotinate + H(+). It participates in nucleoside biosynthesis; alpha-ribazole biosynthesis; alpha-ribazole from 5,6-dimethylbenzimidazole: step 1/2. Functionally, catalyzes the synthesis of alpha-ribazole-5'-phosphate from nicotinate mononucleotide (NAMN) and 5,6-dimethylbenzimidazole (DMB). The polypeptide is Nicotinate-nucleotide--dimethylbenzimidazole phosphoribosyltransferase (Sinorhizobium medicae (strain WSM419) (Ensifer medicae)).